The following is a 551-amino-acid chain: MEMTRTVRAPRGTQLSCKGWQQEAALRMLMNNLDPEVAERPEELVVYGGSGKAARSWEAFDAIVKALRSLEDDETLLVQSGKPVAIFRTHRMAPRVLIANSNLVARWATWEHFWELERKGLMMFGQMTAGSWIYIGTQGILQGTYETFAEAARQHFGGSLKGRLALTAGLGGMGGAQPLAVTMNEGVAIVVEVDEARIQRRLDHRYLDRMTRSLDEALAWARESMAKGEPLSIGLLGNAATIYPEIVRRGVIPDVVTDQTSAHDPLNGYIPEGLSVQEAAKLRKADPDEYIRRAKASIVKHVQAMLDMQKAGAVVFDYGNNIRQQAYEEGLKDAFAFPGFVPAFIRPLFCEGKGPFRWVALSGDPEDIYKTDRAIMELFPENQSLRRWLEMAQKKVHFQGLPARICWLGYGERVKAGLKFNEMVASGELKAPIVIGRDHLDAGSVASPNRETEAMKDGSDAVADWPLLNALVNTAAGATWVSIHHGGGVGIGYSQHAGMVVVADGTEEARVRLERVLTTDPGMGVVRHVDAGYEKALQVARERGIRLPMYE.

Residues 48–49 (GG), glutamine 126, 172–174 (GMG), glutamate 192, arginine 197, 238–239 (NA), 259–263 (QTSAH), 269–270 (YI), and tyrosine 318 contribute to the NAD(+) site. The active site involves cysteine 406. An NAD(+)-binding site is contributed by glycine 488.

Belongs to the urocanase family. It depends on NAD(+) as a cofactor.

The protein localises to the cytoplasm. The enzyme catalyses 4-imidazolone-5-propanoate = trans-urocanate + H2O. It participates in amino-acid degradation; L-histidine degradation into L-glutamate; N-formimidoyl-L-glutamate from L-histidine: step 2/3. Its function is as follows. Catalyzes the conversion of urocanate to 4-imidazolone-5-propionate. In Symbiobacterium thermophilum (strain DSM 24528 / JCM 14929 / IAM 14863 / T), this protein is Urocanate hydratase.